The following is a 173-amino-acid chain: RNA pyrophosphohydrolase (173 aa).

Residues 6-149 (GFRANVGIIL…KRGVYRRALR (144 aa)) enclose the Nudix hydrolase domain. The Nudix box signature appears at 38-59 (GGIDEGETPLDAMYRELWEEVG).

The protein belongs to the Nudix hydrolase family. RppH subfamily. A divalent metal cation is required as a cofactor.

In terms of biological role, accelerates the degradation of transcripts by removing pyrophosphate from the 5'-end of triphosphorylated RNA, leading to a more labile monophosphorylated state that can stimulate subsequent ribonuclease cleavage. This Psychrobacter sp. (strain PRwf-1) protein is RNA pyrophosphohydrolase.